The chain runs to 313 residues: Ribosomal RNA small subunit methyltransferase H (313 aa).

S-adenosyl-L-methionine is bound by residues 35–37 (GGH), D55, F79, D101, and Q108.

This sequence belongs to the methyltransferase superfamily. RsmH family.

It is found in the cytoplasm. The enzyme catalyses cytidine(1402) in 16S rRNA + S-adenosyl-L-methionine = N(4)-methylcytidine(1402) in 16S rRNA + S-adenosyl-L-homocysteine + H(+). Its function is as follows. Specifically methylates the N4 position of cytidine in position 1402 (C1402) of 16S rRNA. In Shigella flexneri, this protein is Ribosomal RNA small subunit methyltransferase H.